The primary structure comprises 206 residues: Ribosomal RNA small subunit methyltransferase G (206 aa).

S-adenosyl-L-methionine-binding positions include G74, L79, 125–126 (VE), and R140.

The protein belongs to the methyltransferase superfamily. RNA methyltransferase RsmG family.

It localises to the cytoplasm. It carries out the reaction guanosine(527) in 16S rRNA + S-adenosyl-L-methionine = N(7)-methylguanosine(527) in 16S rRNA + S-adenosyl-L-homocysteine. In terms of biological role, specifically methylates the N7 position of guanine in position 527 of 16S rRNA. The polypeptide is Ribosomal RNA small subunit methyltransferase G (Shewanella woodyi (strain ATCC 51908 / MS32)).